Reading from the N-terminus, the 139-residue chain is Putative pre-16S rRNA nuclease (139 aa).

Belongs to the YqgF nuclease family.

The protein localises to the cytoplasm. In terms of biological role, could be a nuclease involved in processing of the 5'-end of pre-16S rRNA. This Streptococcus suis (strain 98HAH33) protein is Putative pre-16S rRNA nuclease.